The sequence spans 352 residues: C-C chemokine receptor type 5 (352 aa).

Residues 1 to 30 are Extracellular-facing; it reads MDYQVSSPTYDIDYYTSEPCQKVNVKQIAA. Tyrosine 3 bears the Sulfotyrosine mark. 2 O-linked (GalNAc...) serine glycosylation sites follow: serine 6 and serine 7. 3 positions are modified to sulfotyrosine: tyrosine 10, tyrosine 14, and tyrosine 15. Intrachain disulfides connect cysteine 20/cysteine 269 and cysteine 101/cysteine 178. Residues 31–58 form a helical membrane-spanning segment; the sequence is RLLPPLYSLVFIFGFVGNILVVLILINC. Residues 59–68 lie on the Cytoplasmic side of the membrane; the sequence is KRLKSMTDIY. Residues 69–89 form a helical membrane-spanning segment; that stretch reads LLNLAISDLFFLLTVPFWAHY. The Extracellular segment spans residues 90–102; that stretch reads AAAQWDFGNTMCQ. The chain crosses the membrane as a helical span at residues 103–124; that stretch reads LLTGLYFIGFFSGIFFIILLTI. Residues 125 to 141 are Cytoplasmic-facing; sequence DRYLAIVHAVFALKART. Residues 142–166 form a helical membrane-spanning segment; it reads VTFGVVTSVITWVVAVFASLPGIIF. Residues 167-198 lie on the Extracellular side of the membrane; the sequence is TRSQREGLHYTCSSHFPYSQYQFWKNFQTLKI. A helical membrane pass occupies residues 199–218; the sequence is VILGLVLPLLVMVICYSGIL. Over 219–235 the chain is Cytoplasmic; that stretch reads KTLLRCRNEKKRHRAVR. A helical transmembrane segment spans residues 236 to 260; the sequence is LIFTIMIVYFLFWAPYNIVLLLNTF. The Extracellular segment spans residues 261-277; sequence QEFFGLNNCSSSNRLDQ. Residues 278–301 traverse the membrane as a helical segment; it reads AMQVTETLGMTHCCINPIIYAFVG. Topologically, residues 302–352 are cytoplasmic; that stretch reads EKFRNYLLVFFQKHIAKRFCKCCSIFQQEAPERASSVYTRSTGEQETSVGL. Residues cysteine 321, cysteine 323, and cysteine 324 are each lipidated (S-palmitoyl cysteine). 4 positions are modified to phosphoserine; by BARK1: serine 336, serine 337, serine 342, and serine 349.

It belongs to the G-protein coupled receptor 1 family. As to quaternary structure, interacts with PRAF2. Efficient ligand binding to CCL3/MIP-1alpha and CCL4/MIP-1beta requires sulfation, O-glycosylation and sialic acid modifications. Glycosylation on Ser-6 is required for efficient binding of CCL4. Interacts with GRK2. Interacts with ARRB1 and ARRB2. Interacts with CNIH4. Interacts with S100A4; this interaction stimulates T-lymphocyte chemotaxis. Post-translationally, sulfated on at least 2 of the N-terminal tyrosines. Sulfation is required for efficient binding of the chemokines, CCL3 and CCL4. In terms of processing, palmitoylation in the C-terminal is important for cell surface expression. Phosphorylation on serine residues in the C-terminal is stimulated by binding CC chemokines especially by APO-RANTES. Post-translationally, O-glycosylated, but not N-glycosylated. Ser-6 appears to be the major site even if Ser-7 may be also O-glycosylated. Also sialylated glycans present which contribute to chemokine binding. Thr-16 and Ser-17 may also be glycosylated and, if so, with small moieties such as a T-antigen.

It localises to the cell membrane. Receptor for a number of inflammatory CC-chemokines including CCL3/MIP-1-alpha, CCL4/MIP-1-beta and RANTES and subsequently transduces a signal by increasing the intracellular calcium ion level. May play a role in the control of granulocytic lineage proliferation or differentiation. Participates in T-lymphocyte migration to the infection site by acting as a chemotactic receptor. The polypeptide is C-C chemokine receptor type 5 (CCR5) (Trachypithecus francoisi (Francois' leaf monkey)).